The chain runs to 577 residues: Isocitrate dehydrogenase kinase/phosphatase (577 aa).

Residues 324 to 330 (APGIRGL) and Lys-345 contribute to the ATP site. The active site involves Asp-380.

It belongs to the AceK family.

It is found in the cytoplasm. It carries out the reaction L-seryl-[isocitrate dehydrogenase] + ATP = O-phospho-L-seryl-[isocitrate dehydrogenase] + ADP + H(+). Functionally, bifunctional enzyme which can phosphorylate or dephosphorylate isocitrate dehydrogenase (IDH) on a specific serine residue. This is a regulatory mechanism which enables bacteria to bypass the Krebs cycle via the glyoxylate shunt in response to the source of carbon. When bacteria are grown on glucose, IDH is fully active and unphosphorylated, but when grown on acetate or ethanol, the activity of IDH declines drastically concomitant with its phosphorylation. This is Isocitrate dehydrogenase kinase/phosphatase from Pseudoalteromonas atlantica (strain T6c / ATCC BAA-1087).